We begin with the raw amino-acid sequence, 251 residues long: Fibroblast growth factor 23 (251 aa).

The signal sequence occupies residues 1–24 (MLGARLRLWVCALCSVCSMSVLRA). Cysteines 95 and 113 form a disulfide. O-linked (GalNAc) threonine glycosylation is found at threonine 171 and threonine 178. Positions 172 to 221 (PIPRRHTRSAEDDSERDPLNVLKPRARMTPAPASCSQELPSAEDNSPMAS) are disordered. Serine 180 carries the phosphoserine; by FAM20C modification. Residues 205-219 (SCSQELPSAEDNSPM) show a composition bias toward polar residues.

This sequence belongs to the heparin-binding growth factors family. Interacts with FGFR1, FGFR2, FGFR3 and FGFR4. Affinity between fibroblast growth factors (FGFs) and their receptors is increased by KL and heparan sulfate glycosaminoglycans that function as coreceptors. In terms of processing, following secretion this protein is inactivated by cleavage into a N-terminal fragment and a C-terminal fragment. The processing is effected by proprotein convertases. Post-translationally, O-glycosylated at Thr-171 and Thr-178 by GALNT3 and glycosylation of Thr-178 requires previous glycosylation at Thr171. Glycosylation is necessary for secretion; it blocks processing by proprotein convertases when the O-glycan is alpha 2,6-sialylated. Competition between proprotein convertase cleavage and block of cleavage by O-glycosylation determines the level of secreted active FGF23. Phosphorylation at Ser-180 mediated by FAM20C slows down glycosylation at Thr-178 notably. Expressed in osteogenic cells particularly during phases of active bone remodeling. In adult trabecular bone, expressed in osteocytes and flattened bone-lining cells (inactive osteoblasts).

It localises to the secreted. Functionally, regulator of phosphate homeostasis. Inhibits renal tubular phosphate transport by reducing SLC34A1 levels. Up-regulates EGR1 expression in the presence of KL. Acts directly on the parathyroid to decrease PTH secretion. Regulator of vitamin-D metabolism. Negatively regulates osteoblast differentiation and matrix mineralization. The chain is Fibroblast growth factor 23 (FGF23) from Homo sapiens (Human).